Here is a 371-residue protein sequence, read N- to C-terminus: Alanine dehydrogenase (371 aa).

Positions 15 and 75 each coordinate substrate. The active-site Proton donor/acceptor is the His-96. Residues Ser-134, 178-179 (TA), Asp-198, Lys-203, Ser-220, 239-240 (VL), 267-270 (IAID), Arg-279, and 298-301 (VANM) each bind NAD(+). Asp-270 acts as the Proton donor/acceptor in catalysis. Positions 323 and 327 each coordinate Mg(2+).

This sequence belongs to the AlaDH/PNT family. As to quaternary structure, homohexamer. Trimer of dimers. Mg(2+) serves as cofactor.

Its subcellular location is the secreted. It catalyses the reaction L-alanine + NAD(+) + H2O = pyruvate + NH4(+) + NADH + H(+). The protein operates within amino-acid degradation; L-alanine degradation via dehydrogenase pathway; NH(3) and pyruvate from L-alanine: step 1/1. In terms of biological role, catalyzes the reversible reductive amination of pyruvate to L-alanine. However, since the physiological environment of M.tuberculosis has a neutral pH, it can be assumed that the enzyme catalyzes exclusively the formation of L-alanine. May play a role in cell wall synthesis as L-alanine is an important constituent of the peptidoglycan layer. The sequence is that of Alanine dehydrogenase (ald) from Mycobacterium tuberculosis (strain CDC 1551 / Oshkosh).